The following is a 566-amino-acid chain: Putative ABC transporter ATP-binding protein BT9727_2424 (566 aa).

2 consecutive ABC transporter domains span residues 5 to 246 (ISFE…GLRE) and 300 to 533 (LKVE…ANLK). ATP-binding positions include 39-46 (GRSGSGKS) and 333-340 (GHNGAGKS).

The protein belongs to the ABC transporter superfamily.

Its subcellular location is the cell membrane. Probably part of an ABC transporter complex. Responsible for energy coupling to the transport system. This Bacillus thuringiensis subsp. konkukian (strain 97-27) protein is Putative ABC transporter ATP-binding protein BT9727_2424.